The sequence spans 493 residues: Cysteine--tRNA ligase (493 aa).

Cysteine 29 provides a ligand contact to Zn(2+). The short motif at 31 to 41 is the 'HIGH' region element; it reads PTVYDFAHIGN. Zn(2+)-binding residues include cysteine 227, histidine 252, and glutamate 256. The short motif at 285–289 is the 'KMSKS' region element; the sequence is KMSKS. Lysine 288 provides a ligand contact to ATP.

It belongs to the class-I aminoacyl-tRNA synthetase family. Monomer. It depends on Zn(2+) as a cofactor.

The protein localises to the cytoplasm. It carries out the reaction tRNA(Cys) + L-cysteine + ATP = L-cysteinyl-tRNA(Cys) + AMP + diphosphate. The chain is Cysteine--tRNA ligase from Rhodopseudomonas palustris (strain HaA2).